We begin with the raw amino-acid sequence, 189 residues long: MELGNQPGPGNRPEIELEWYQYLQNTVGVVLSSYGWYILLGCILIYLLIQKLPQNFTRAGTSNHSTVTDPDEIVRRQEAVTAARLRMQEELNAQAELYKQKQVQLQEEKRQRNIETWDRMKEGKSSKVACRLGQEPSPSTSTSAATKPKQEKQERKTLRGSGYNPLTGDGGGTCAWRPGRRGPSSGGUG.

Residues 29–49 (VVLSSYGWYILLGCILIYLLI) traverse the membrane as a helical segment. Residues 114–125 (IETWDRMKEGKS) show a composition bias toward basic and acidic residues. The segment at 114 to 189 (IETWDRMKEG…RRGPSSGGUG (76 aa)) is disordered. Over residues 136–147 (PSPSTSTSAATK) the composition is skewed to low complexity. Positions 148–157 (PKQEKQERKT) are enriched in basic and acidic residues. Residue selenocysteine 188 is a non-standard amino acid, selenocysteine.

This sequence belongs to the selenoprotein S family.

The protein resides in the endoplasmic reticulum membrane. It localises to the cytoplasm. Its function is as follows. Involved in the degradation process of misfolded endoplasmic reticulum (ER) luminal proteins. Participates in the transfer of misfolded proteins from the ER to the cytosol, where they are destroyed by the proteasome in a ubiquitin-dependent manner. This is Selenoprotein S (vimp) from Xenopus tropicalis (Western clawed frog).